A 228-amino-acid chain; its full sequence is 7-cyano-7-deazaguanine synthase (228 aa).

13-23 serves as a coordination point for ATP; the sequence is LSGGMDSTLSS. 4 residues coordinate Zn(2+): cysteine 192, cysteine 200, cysteine 203, and cysteine 206.

Belongs to the QueC family. The cofactor is Zn(2+).

It carries out the reaction 7-carboxy-7-deazaguanine + NH4(+) + ATP = 7-cyano-7-deazaguanine + ADP + phosphate + H2O + H(+). The protein operates within purine metabolism; 7-cyano-7-deazaguanine biosynthesis. Catalyzes the ATP-dependent conversion of 7-carboxy-7-deazaguanine (CDG) to 7-cyano-7-deazaguanine (preQ(0)). The chain is 7-cyano-7-deazaguanine synthase from Aliarcobacter butzleri (strain RM4018) (Arcobacter butzleri).